Here is a 715-residue protein sequence, read N- to C-terminus: Polyribonucleotide nucleotidyltransferase (715 aa).

Mg(2+)-binding residues include Asp485 and Asp491. In terms of domain architecture, KH spans 552–611 (PRIHTMKIDPKKIKDVIGKGGAVIRALTEETGTSIDIDDDGTVKIAATDNNAAKAVMARI). An S1 motif domain is found at 621–689 (NAIYKGKVTR…RQNRIRLTMK (69 aa)). Positions 695 to 715 (TPVAENVTEEAEVSSEQQAEI) are disordered.

Belongs to the polyribonucleotide nucleotidyltransferase family. As to quaternary structure, component of the RNA degradosome, which is a multiprotein complex involved in RNA processing and mRNA degradation. It depends on Mg(2+) as a cofactor.

It localises to the cytoplasm. It carries out the reaction RNA(n+1) + phosphate = RNA(n) + a ribonucleoside 5'-diphosphate. Functionally, involved in mRNA degradation. Catalyzes the phosphorolysis of single-stranded polyribonucleotides processively in the 3'- to 5'-direction. This chain is Polyribonucleotide nucleotidyltransferase, found in Actinobacillus pleuropneumoniae serotype 7 (strain AP76).